The following is a 196-amino-acid chain: Pyridoxine/pyridoxamine 5'-phosphate oxidase (196 aa).

A substrate-binding site is contributed by Lys49. Residues Lys66 and Gln88 each contribute to the FMN site. 3 residues coordinate substrate: Tyr106, Arg110, and Ser114. Residues 123-124 (QS) and Trp168 each bind FMN. Residue 174 to 176 (RLH) coordinates substrate. Arg178 is a binding site for FMN.

The protein belongs to the pyridoxamine 5'-phosphate oxidase family. As to quaternary structure, homodimer. It depends on FMN as a cofactor.

The catalysed reaction is pyridoxamine 5'-phosphate + O2 + H2O = pyridoxal 5'-phosphate + H2O2 + NH4(+). The enzyme catalyses pyridoxine 5'-phosphate + O2 = pyridoxal 5'-phosphate + H2O2. The protein operates within cofactor metabolism; pyridoxal 5'-phosphate salvage; pyridoxal 5'-phosphate from pyridoxamine 5'-phosphate: step 1/1. It functions in the pathway cofactor metabolism; pyridoxal 5'-phosphate salvage; pyridoxal 5'-phosphate from pyridoxine 5'-phosphate: step 1/1. Catalyzes the oxidation of either pyridoxine 5'-phosphate (PNP) or pyridoxamine 5'-phosphate (PMP) into pyridoxal 5'-phosphate (PLP). The protein is Pyridoxine/pyridoxamine 5'-phosphate oxidase of Bdellovibrio bacteriovorus (strain ATCC 15356 / DSM 50701 / NCIMB 9529 / HD100).